The primary structure comprises 533 residues: Retinoid isomerohydrolase (533 aa).

Cysteine 112 is lipidated: S-palmitoyl cysteine; in membrane form. Phosphoserine is present on serine 117. Residue histidine 180 coordinates Fe cation. Residue cysteine 231 is the site of S-palmitoyl cysteine; in membrane form attachment. Fe cation contacts are provided by histidine 241 and histidine 313. Cysteine 329 is lipidated: S-palmitoyl cysteine; in membrane form. Position 527 (histidine 527) interacts with Fe cation.

The protein belongs to the carotenoid oxygenase family. It depends on Fe(2+) as a cofactor. In terms of processing, palmitoylation by LRAT regulates ligand binding specificity; the palmitoylated form (membrane form) specifically binds all-trans-retinyl-palmitate, while the soluble unpalmitoylated form binds all-trans-retinol (vitamin A). As to expression, retinal pigment epithelium specific.

The protein resides in the cytoplasm. It is found in the cell membrane. Its subcellular location is the microsome membrane. It catalyses the reaction an all-trans-retinyl ester + H2O = 11-cis-retinol + a fatty acid + H(+). It carries out the reaction lutein = (3R,3'S)-zeaxanthin. The enzyme catalyses all-trans-retinyl hexadecanoate + H2O = 11-cis-retinol + hexadecanoate + H(+). Its function is as follows. Critical isomerohydrolase in the retinoid cycle involved in regeneration of 11-cis-retinal, the chromophore of rod and cone opsins. Catalyzes the cleavage and isomerization of all-trans-retinyl fatty acid esters to 11-cis-retinol which is further oxidized by 11-cis retinol dehydrogenase to 11-cis-retinal for use as visual chromophore. Essential for the production of 11-cis retinal for both rod and cone photoreceptors. Also capable of catalyzing the isomerization of lutein to meso-zeaxanthin an eye-specific carotenoid. The soluble form binds vitamin A (all-trans-retinol), making it available for LRAT processing to all-trans-retinyl ester. The membrane form, palmitoylated by LRAT, binds all-trans-retinyl esters, making them available for IMH (isomerohydrolase) processing to all-cis-retinol. The soluble form is regenerated by transferring its palmitoyl groups onto 11-cis-retinol, a reaction catalyzed by LRAT. The chain is Retinoid isomerohydrolase (RPE65) from Gallus gallus (Chicken).